We begin with the raw amino-acid sequence, 782 residues long: Small RNA degrading nuclease 3 (782 aa).

The Exonuclease domain occupies 145–296 (MLSIDCEMVT…HDAAAAMKLV (152 aa)). Residues 331-410 (AQLFLHKIPH…KKAVLKLSSG (80 aa)) enclose the RRM 1 domain. The segment at 426-464 (PCEISTSERARAEENNVSSKRQKTEDETEETKEATVNQR) is disordered. One can recognise an RRM 2 domain in the interval 469–549 (TKLFLHKIPH…KMVVFKLSSG (81 aa)). Positions 563–605 (DSPGEISTTKRARTEESNMSSKRQKTEDESEETKEANAKQREA) are disordered. A coiled-coil region spans residues 577–605 (EESNMSSKRQKTEDESEETKEANAKQREA). Residues 595–605 (TKEANAKQREA) are compositionally biased toward basic and acidic residues. Residues 608–688 (TKLLLHKIPL…KMVAFKLSSG (81 aa)) enclose the RRM 3 domain. Residues 709–779 (ANANHCEDDH…KMKLEKKQSK (71 aa)) are a coiled coil.

This sequence belongs to the REXO1/REXO3 family. In terms of assembly, associated with the Mediator complex.

Its subcellular location is the nucleus. Its function is as follows. 3'-5' exonuclease degrading single-stranded small RNAs. The polypeptide is Small RNA degrading nuclease 3 (SDN3) (Arabidopsis thaliana (Mouse-ear cress)).